The primary structure comprises 338 residues: Glycerol-3-phosphate dehydrogenase [NAD(P)+] (338 aa).

NADPH-binding residues include tryptophan 11, arginine 30, and lysine 109. Sn-glycerol 3-phosphate contacts are provided by lysine 109, glycine 143, and serine 145. Alanine 147 is an NADPH binding site. Sn-glycerol 3-phosphate contacts are provided by lysine 198, aspartate 251, serine 261, arginine 262, and asparagine 263. Lysine 198 serves as the catalytic Proton acceptor. Arginine 262 contributes to the NADPH binding site. Positions 286 and 288 each coordinate NADPH.

It belongs to the NAD-dependent glycerol-3-phosphate dehydrogenase family.

Its subcellular location is the cytoplasm. The enzyme catalyses sn-glycerol 3-phosphate + NAD(+) = dihydroxyacetone phosphate + NADH + H(+). It carries out the reaction sn-glycerol 3-phosphate + NADP(+) = dihydroxyacetone phosphate + NADPH + H(+). Its pathway is membrane lipid metabolism; glycerophospholipid metabolism. Its function is as follows. Catalyzes the reduction of the glycolytic intermediate dihydroxyacetone phosphate (DHAP) to sn-glycerol 3-phosphate (G3P), the key precursor for phospholipid synthesis. The protein is Glycerol-3-phosphate dehydrogenase [NAD(P)+] of Cupriavidus taiwanensis (strain DSM 17343 / BCRC 17206 / CCUG 44338 / CIP 107171 / LMG 19424 / R1) (Ralstonia taiwanensis (strain LMG 19424)).